Here is a 219-residue protein sequence, read N- to C-terminus: Elongation factor Ts (219 aa).

The involved in Mg(2+) ion dislocation from EF-Tu stretch occupies residues 82-85; sequence TDFV.

Belongs to the EF-Ts family.

It localises to the cytoplasm. Functionally, associates with the EF-Tu.GDP complex and induces the exchange of GDP to GTP. It remains bound to the aminoacyl-tRNA.EF-Tu.GTP complex up to the GTP hydrolysis stage on the ribosome. The chain is Elongation factor Ts from Anaeromyxobacter sp. (strain K).